The chain runs to 272 residues: Sulfur carrier protein FdhD (272 aa).

Cys114 functions as the Cysteine persulfide intermediate in the catalytic mechanism.

It belongs to the FdhD family.

Its subcellular location is the cytoplasm. Required for formate dehydrogenase (FDH) activity. Acts as a sulfur carrier protein that transfers sulfur from IscS to the molybdenum cofactor prior to its insertion into FDH. This chain is Sulfur carrier protein FdhD, found in Mycolicibacterium paratuberculosis (strain ATCC BAA-968 / K-10) (Mycobacterium paratuberculosis).